The primary structure comprises 842 residues: Elongation factor 2 (842 aa).

The 237-residue stretch at 17-253 folds into the tr-type G domain; the sequence is TNVRNMSVIA…LWGDSYFNPK (237 aa). Residues 26 to 33, 158 to 161, and 213 to 215 each bind GTP; these read AHVDHGKS, NKVD, and SGL. The residue at position 699 (His-699) is a Diphthamide.

This sequence belongs to the TRAFAC class translation factor GTPase superfamily. Classic translation factor GTPase family. EF-G/EF-2 subfamily.

It localises to the cytoplasm. The enzyme catalyses GTP + H2O = GDP + phosphate + H(+). In terms of biological role, catalyzes the GTP-dependent ribosomal translocation step during translation elongation. During this step, the ribosome changes from the pre-translocational (PRE) to the post-translocational (POST) state as the newly formed A-site-bound peptidyl-tRNA and P-site-bound deacylated tRNA move to the P and E sites, respectively. Catalyzes the coordinated movement of the two tRNA molecules, the mRNA and conformational changes in the ribosome. This chain is Elongation factor 2 (EFT1), found in Kluyveromyces lactis (strain ATCC 8585 / CBS 2359 / DSM 70799 / NBRC 1267 / NRRL Y-1140 / WM37) (Yeast).